Here is a 1609-residue protein sequence, read N- to C-terminus: MVAKKTVRSYRSSFSHSVIVAILSAGIAFEAHSLHSSELDLGVFNKQFEEHSAHVEEAQTSVLKGSDPVNPSQKESEKVLYTQVPLTQGSSGESLDLADANFLEHFQHLFEETTVFGIDQKLVWSDLDTRNFSQPTQEPDTSNAVSEKISSDTKENRKDLETEDPSKKSGLKEVSSDLPKSPETAVAAISEDLEISENISARDPLQGLAFFYKNTSSQSISEKDSSFQGIIFSGSGANSGLGFENLKAPKSGAAVYSDRDIVFENLVKGLSFISCESLEDGSAAGVNIVVTHCGDVTLTDCATGLDLEALRLVKDFSRGGAVFTARNHEVQNNLAGGILSVVGNKGAIVVEKNSAEKSNGGAFACGSFVYSNNENTALWKENQALSGGAISSASDIDIQGNCSAIEFSGNQSLIALGEHIGLTDFVGGGALAAQGTLTLRNNAVVQCVKNTSKTHGGAILAGTVDLNETISEVAFKQNTAALTGGALSANDKVIIANNFGEILFEQNEVRNHGGAIYCGCRSNPKLEQKDSGENINIIGNSGAITFLKNKASVLEVMTQAEDYAGGGALWGHNVLLDSNSGNIQFIGNIGGSTFWIGEYVGGGAILSTDRVTISNNSGDVVFKGNKGQCLAQKYVAPQETAPVESDASSTNKDEKSLNACSHGDHYPPKTVEEEVPPSLLEEHPVVSSTDIRGGGAILAQHIFITDNTGNLRFSGNLGGGEESSTVGDLAIVGGGALLSTNEVNVCSNQNVVFSDNVTSNGCDSGGAILAKKVDISANHSVEFVSNGSGKFGGAVCALNESVNITDNGSAVSFSKNRTRLGGAGVAAPQGSVTICGNQGNIAFKENFVFGSENQRSGGGAIIANSSVNIQDNAGDILFVSNSTGSYGGAIFVGSLVASEGSNPRTLTITGNSGDILFAKNSTQTAASLSEKDSFGGGAIYTQNLKIVKNAGNVSFYGNRAPSGAGVQIADGGTVCLEAFGGDILFEGNINFDGSFNAIHLCGNDSKIVELSAVQDKNIIFQDAITYEENTIRGLPDKDVSPLSAPSLIFNSKPQDDSAQHHEGTIRFSRGVSKIPQIAAIQEGTLALSQNAELWLAGLKQETGSSIVLSAGSILRIFDSQVDSSAPLPTENKEETLVSAGVQINMSSPTPNKDKAVDTPVLADIISITVDLSSFVPEQDGTLPLPPEIIIPKGTKLHSNAIDLKIIDPTNVGYENHALLSSHKDIPLISLKTAEGMTGTPTADASLSNIKIDVSLPSITPATYGHTGVWSESKMEDGRLVVGWQPTGYKLNPEKQGALVLNNLWSHYTDLRALKQEIFAHHTIAQRMELDFSTNVWGSGLGVVEDCQNIGEFDGFKHHLTGYALGLDTQLVEDFLIGGCFSQFFGKTESQSYKAKNDVKSYMGAAYAGILAGPWLIKGAFVYGNINNDLTTDYGTLGISTGSWIGKGFIAGTSIDYRYIVNPRRFISAIVSTVVPFVEAEYVRIDLPEISEQGKEVRTFQKTRFENVAIPFGFALEHAYSRGSRAEVNSVQLAYVFDVYRKGPVSLITLKDAAYSWKSYGVDIPCKAWKARLSNNTEWNSYLSTYLAFNYEWREDLIAYDFNGGIRIIF.

The N-terminal stretch at Met1–Glu30 is a signal peptide. A compositionally biased stretch (polar residues) spans Phe132–Val145. 2 disordered regions span residues Phe132–Glu183 and Thr640–Pro677. Composition is skewed to basic and acidic residues over residues Ile149–Ser175 and Asn651–Glu672. One can recognise an Autotransporter domain in the interval Glu1328–Phe1609.

It belongs to the PMP outer membrane protein family.

It is found in the secreted. The protein resides in the cell wall. The protein localises to the cell outer membrane. The sequence is that of Probable outer membrane protein pmp21 (pmp21) from Chlamydia pneumoniae (Chlamydophila pneumoniae).